A 183-amino-acid chain; its full sequence is Archaemetzincin (183 aa).

Position 131 (His-131) interacts with Zn(2+). Glu-132 (proton acceptor) is an active-site residue. Zn(2+) contacts are provided by His-135, His-141, Cys-142, Cys-147, and Cys-166.

Belongs to the peptidase M54 family. As to quaternary structure, monomer. The cofactor is Zn(2+).

In terms of biological role, probable zinc metalloprotease whose natural substrate is unknown. The protein is Archaemetzincin of Saccharolobus solfataricus (strain ATCC 35092 / DSM 1617 / JCM 11322 / P2) (Sulfolobus solfataricus).